Here is a 72-residue protein sequence, read N- to C-terminus: Translation initiation factor IF-1 (72 aa).

The S1-like domain occupies 1–72 (MSKEDAIEVM…TRGRIVYRYK (72 aa)).

Belongs to the IF-1 family. In terms of assembly, component of the 30S ribosomal translation pre-initiation complex which assembles on the 30S ribosome in the order IF-2 and IF-3, IF-1 and N-formylmethionyl-tRNA(fMet); mRNA recruitment can occur at any time during PIC assembly.

It is found in the cytoplasm. Functionally, one of the essential components for the initiation of protein synthesis. Stabilizes the binding of IF-2 and IF-3 on the 30S subunit to which N-formylmethionyl-tRNA(fMet) subsequently binds. Helps modulate mRNA selection, yielding the 30S pre-initiation complex (PIC). Upon addition of the 50S ribosomal subunit IF-1, IF-2 and IF-3 are released leaving the mature 70S translation initiation complex. This chain is Translation initiation factor IF-1, found in Koribacter versatilis (strain Ellin345).